A 223-amino-acid polypeptide reads, in one-letter code: 7-carboxy-7-deazaguanine synthase (223 aa).

Residues 12 to 14 and arginine 27 each bind substrate; that span reads LQG. Residues 18-223 form the Radical SAM core domain; it reads FTGVPAIFIR…MQTHKYLNIA (206 aa). 3 residues coordinate [4Fe-4S] cluster: cysteine 31, cysteine 35, and cysteine 38. Threonine 40 contributes to the Mg(2+) binding site. Substrate is bound at residue threonine 92. Residues glycine 94 and 136-138 contribute to the S-adenosyl-L-methionine site; that span reads SPK.

It belongs to the radical SAM superfamily. 7-carboxy-7-deazaguanine synthase family. In terms of assembly, homodimer. The cofactor is [4Fe-4S] cluster. It depends on S-adenosyl-L-methionine as a cofactor. Mg(2+) serves as cofactor.

The catalysed reaction is 6-carboxy-5,6,7,8-tetrahydropterin + H(+) = 7-carboxy-7-deazaguanine + NH4(+). The protein operates within purine metabolism; 7-cyano-7-deazaguanine biosynthesis. In terms of biological role, catalyzes the complex heterocyclic radical-mediated conversion of 6-carboxy-5,6,7,8-tetrahydropterin (CPH4) to 7-carboxy-7-deazaguanine (CDG), a step common to the biosynthetic pathways of all 7-deazapurine-containing compounds. The sequence is that of 7-carboxy-7-deazaguanine synthase from Escherichia coli (strain K12).